The sequence spans 1020 residues: MTEGRRCQVHLLDDRKLELLVQPKLLAKELLDLVASHFNLKEKEYFGIAFTDETGHLNWLQLDRRVLEHDFPKKSGPVVLYFCVRFYIESISYLKDNATIELFFLNAKSCIYKELIDVDSEVVFELASYILQEAKGDFSSNEVVRSDLKKLPALPTQALKEHPSLAYCEDRVIEYYKKLNGQTRGQAIVNYMSIVESLPTYGVHYYAVKDKQGIPWWLGLSYKGIFQYDYHDKVKPRKIFQWRQLENLYFREKKFSVEVHDPRRASVTRRTFGHSGIAVHTWYACPALIKSIWAMAISQHQFYLDRKQSKSKIHAARSLSEIAIDLTETGTLKTSKLANMGSKGKIISGSSGSLLSSGSQESDSSQSAKKDMLAALKSRQEALEETLRQRLEELKRLCLREAELTGKLPVEYPLDPGEEPPIVRRRIGTAFKLDEQKILPKGEEAELERLEREFAIQSQITEAARRLASDPNVSKKLKKQRKTSYLNALKKLQEIENAINENRIKSGKKPTQRASLVIDDGNIASEDSSLSDALVLEDEDSQVTSTISPLQSPHKGLPPRPPSSHNRPPPPQSLEGLRQLHYHRTDYDKSPLKPKMWSESSLDEPYEKVKKRSSHGHSSSHKRFPSTGSCTEAGVSSSLQNSPIRSLPHWNSQSSMPSTPDLRVRSPHYVHSTRSVDISPTRLHSLALHFRHRSSSLESQGKLLGSENDTGSPDFYTPRTRSSNGSDPMDDCSSCTSHSSSEHYYPAQMNANYSTLAEDSPSKARQRQRQRQRAAGALGSASSGSMPNLAARSGAASTGGGVYLHSQSQPSSQYRIKEYPLYIEGSATPVVVRSLESDQEGHYSVKAQFKTSNSYTAGGLFKESWRGGGDEGDAGRLTPSRSQILRTPSLGRDGAHDKGSGRAAVSDELRQWYQRSTASHKEHSRLSHTSSTSSDSGSQYSTSSQSTFVAHSRVTRMPQMCKATSAALPQSQRSSTPSSEIGATPPSSPHHILTWQTGEATENSPIMDGSESPTHQSTDE.

The 303-residue stretch at 5-307 (RRCQVHLLDD…SQHQFYLDRK (303 aa)) folds into the FERM domain. The necessary for interaction with CYTH1 stretch occupies residues 343–405 (KGKIISGSSG…RLCLREAELT (63 aa)). A compositionally biased stretch (low complexity) spans 351–367 (SGSLLSSGSQESDSSQS). The tract at residues 351-371 (SGSLLSSGSQESDSSQSAKKD) is disordered. A coiled-coil region spans residues 367–401 (SAKKDMLAALKSRQEALEETLRQRLEELKRLCLRE). The residue at position 515 (S515) is a Phosphoserine. Residues 538–665 (DEDSQVTSTI…MPSTPDLRVR (128 aa)) are disordered. The segment covering 542–551 (QVTSTISPLQ) has biased composition (polar residues). Positions 556-572 (GLPPRPPSSHNRPPPPQ) are enriched in pro residues. A necessary for tight junction and adherens junction localization; Requires for interaction with PARD3 region spans residues 565–920 (HNRPPPPQSL…QWYQRSTASH (356 aa)). A phosphoserine mark is found at S590 and S601. Residues 609 to 624 (VKKRSSHGHSSSHKRF) show a composition bias toward basic residues. A compositionally biased stretch (polar residues) spans 626 to 658 (STGSCTEAGVSSSLQNSPIRSLPHWNSQSSMPS). S666 and S696 each carry phosphoserine. Disordered stretches follow at residues 698 to 741 (ESQG…HSSS) and 757 to 810 (AEDS…QSQP). Positions 773–796 (RAAGALGSASSGSMPNLAARSGAA) are enriched in low complexity. A phosphoserine mark is found at S785, S854, and S882. Disordered regions lie at residues 862 to 949 (KESW…STFV) and 961 to 1020 (CKAT…STDE). Residues 893-910 (DGAHDKGSGRAAVSDELR) are compositionally biased toward basic and acidic residues. Over residues 927–947 (SHTSSTSSDSGSQYSTSSQST) the composition is skewed to low complexity. 3 stretches are compositionally biased toward polar residues: residues 967-981 (ALPQSQRSSTPSSEI), 994-1004 (TWQTGEATENS), and 1011-1020 (ESPTHQSTDE).

In terms of assembly, interacts (via coiled-coil domain) with CYTH1 (via coiled-coil domain). Interacts with PARD3 (via coiled-coil domain). Found in a complex with PARD3, CYTH1 and FRMD4A. Interacts with CYTH2. Interacts with CYTH3.

It is found in the cytoplasm. Its subcellular location is the cytoskeleton. The protein resides in the cell junction. It localises to the adherens junction. The protein localises to the tight junction. Its function is as follows. Scaffolding protein that regulates epithelial cell polarity by connecting ARF6 activation with the PAR3 complex. Plays a redundant role with FRMD4B in epithelial polarization. May regulate MAPT secretion by activating ARF6-signaling. The polypeptide is FERM domain-containing protein 4A (Frmd4a) (Mus musculus (Mouse)).